The following is a 100-amino-acid chain: Urease subunit gamma (100 aa).

This sequence belongs to the urease gamma subunit family. As to quaternary structure, heterotrimer of UreA (gamma), UreB (beta) and UreC (alpha) subunits. Three heterotrimers associate to form the active enzyme.

Its subcellular location is the cytoplasm. It catalyses the reaction urea + 2 H2O + H(+) = hydrogencarbonate + 2 NH4(+). The protein operates within nitrogen metabolism; urea degradation; CO(2) and NH(3) from urea (urease route): step 1/1. This is Urease subunit gamma from Bacillus cereus (strain ATCC 10987 / NRS 248).